The chain runs to 247 residues: Cytochrome c oxidase subunit 2 (247 aa).

The signal sequence occupies residues 1–11; it reads MFYLLNSIIMN. Residues 12-38 lie on the Mitochondrial intermembrane side of the membrane; that stretch reads DVPTPYGMYFQDSATPNQEGILELHDN. Residues 39 to 59 form a helical membrane-spanning segment; it reads IMFYLFIILGLVSWLLFTIVR. The Mitochondrial matrix portion of the chain corresponds to 60-78; the sequence is TYSKNPIAYKYIKHGQTIE. The helical transmembrane segment at 79-101 threads the bilayer; that stretch reads IIWTIFPAVILLIIAFPSFILLY. Over 102–247 the chain is Mitochondrial intermembrane; the sequence is LCDEVISPAM…PAFLEWLNEQ (146 aa). 6 residues coordinate Cu cation: histidine 182, cysteine 217, glutamate 219, cysteine 221, histidine 225, and methionine 228. Residue glutamate 219 participates in Mg(2+) binding.

Belongs to the cytochrome c oxidase subunit 2 family. As to quaternary structure, component of the cytochrome c oxidase (complex IV, CIV), a multisubunit enzyme composed of a catalytic core of 3 subunits and several supernumerary subunits. The complex exists as a monomer or a dimer and forms supercomplexes (SCs) in the inner mitochondrial membrane with ubiquinol-cytochrome c oxidoreductase (cytochrome b-c1 complex, complex III, CIII). Cu cation is required as a cofactor. Post-translationally, the signal sequence of COX2 is processed by IMP1.

The protein localises to the mitochondrion inner membrane. The catalysed reaction is 4 Fe(II)-[cytochrome c] + O2 + 8 H(+)(in) = 4 Fe(III)-[cytochrome c] + 2 H2O + 4 H(+)(out). Functionally, component of the cytochrome c oxidase, the last enzyme in the mitochondrial electron transport chain which drives oxidative phosphorylation. The respiratory chain contains 3 multisubunit complexes succinate dehydrogenase (complex II, CII), ubiquinol-cytochrome c oxidoreductase (cytochrome b-c1 complex, complex III, CIII) and cytochrome c oxidase (complex IV, CIV), that cooperate to transfer electrons derived from NADH and succinate to molecular oxygen, creating an electrochemical gradient over the inner membrane that drives transmembrane transport and the ATP synthase. Cytochrome c oxidase is the component of the respiratory chain that catalyzes the reduction of oxygen to water. Electrons originating from reduced cytochrome c in the intermembrane space (IMS) are transferred via the dinuclear copper A center (CU(A)) of subunit 2 and heme A of subunit 1 to the active site in subunit 1, a binuclear center (BNC) formed by heme A3 and copper B (CU(B)). The BNC reduces molecular oxygen to 2 water molecules using 4 electrons from cytochrome c in the IMS and 4 protons from the mitochondrial matrix. The sequence is that of Cytochrome c oxidase subunit 2 (COX2) from Kluyveromyces lactis (strain ATCC 8585 / CBS 2359 / DSM 70799 / NBRC 1267 / NRRL Y-1140 / WM37) (Yeast).